A 573-amino-acid polypeptide reads, in one-letter code: DNA ligase (573 aa).

An ATP-binding site is contributed by E250. The N6-AMP-lysine intermediate role is filled by K252. ATP-binding residues include R257, R272, E301, F342, R432, and K438.

The protein belongs to the ATP-dependent DNA ligase family. Mg(2+) serves as cofactor.

It carries out the reaction ATP + (deoxyribonucleotide)n-3'-hydroxyl + 5'-phospho-(deoxyribonucleotide)m = (deoxyribonucleotide)n+m + AMP + diphosphate.. Functionally, DNA ligase that seals nicks in double-stranded DNA during DNA replication, DNA recombination and DNA repair. This Methanococcus maripaludis (strain C5 / ATCC BAA-1333) protein is DNA ligase.